A 268-amino-acid polypeptide reads, in one-letter code: NH(3)-dependent NAD(+) synthetase (268 aa).

Position 46–53 (46–53) interacts with ATP; the sequence is GVSGGQDS. D52 serves as a coordination point for Mg(2+). A deamido-NAD(+)-binding site is contributed by R140. T160 contributes to the ATP binding site. E165 contributes to the Mg(2+) binding site. K173 and D180 together coordinate deamido-NAD(+). K189 contacts ATP. Position 260–261 (260–261) interacts with deamido-NAD(+); the sequence is HK.

The protein belongs to the NAD synthetase family. In terms of assembly, homodimer.

The catalysed reaction is deamido-NAD(+) + NH4(+) + ATP = AMP + diphosphate + NAD(+) + H(+). Its pathway is cofactor biosynthesis; NAD(+) biosynthesis; NAD(+) from deamido-NAD(+) (ammonia route): step 1/1. Its function is as follows. Catalyzes the ATP-dependent amidation of deamido-NAD to form NAD. Uses ammonia as a nitrogen source. The chain is NH(3)-dependent NAD(+) synthetase from Buchnera aphidicola subsp. Acyrthosiphon pisum (strain APS) (Acyrthosiphon pisum symbiotic bacterium).